The chain runs to 473 residues: Levansucrase (473 aa).

The first 29 residues, 1–29 (MNIKKFAKQATVLTFTTALLAGGATQAFA), serve as a signal peptide directing secretion. Residues Trp85, Asp86, and Ser164 each coordinate sucrose. Asp86 serves as the catalytic Nucleophile. Asp241 is a binding site for Ca(2+). The sucrose site is built by Arg246 and Asp247. Gln272, Leu308, Asn310, and Asp339 together coordinate Ca(2+). Residue Glu340 coordinates sucrose. The active-site Proton donor/acceptor is Glu342. Residue Arg360 participates in sucrose binding.

Belongs to the glycosyl hydrolase 68 family. In terms of assembly, monomer.

Its subcellular location is the secreted. It carries out the reaction [6)-beta-D-fructofuranosyl-(2-&gt;](n) alpha-D-glucopyranoside + sucrose = [6)-beta-D-fructofuranosyl-(2-&gt;](n+1) alpha-D-glucopyranoside + D-glucose. Ca(2+) may play an important structural role and promote stability of levansucrase. The enzyme concentration is a factor defining the molecular weight (MW) levan distribution. A bimodal distribution is reported at the usual enzyme concentrations. At low concentrations, the enzyme synthesizes high MW levan, and at high concentrations, it synthesizes low MW levan. In terms of biological role, catalyzes the synthesis of levan, a fructose polymer, by transferring the fructosyl moiety from sucrose to a growing acceptor molecule. Also displays sucrose hydrolase activity. At low sucrose concentrations, functions as an hydrolase with water as acceptor, whereas at higher substrate concentrations it adds fructosyl units to a growing levan chain. The sequence is that of Levansucrase from Bacillus subtilis (strain 168).